A 644-amino-acid polypeptide reads, in one-letter code: Keratin, type II cytoskeletal 1 (644 aa).

The tract at residues serine 2 to arginine 179 is head. Position 12 is an omega-N-methylarginine (arginine 12). Residues serine 18 and serine 21 each carry the phosphoserine modification. The segment covering alanine 22 to arginine 38 has biased composition (low complexity). The tract at residues alanine 22 to serine 47 is disordered. The residue at position 45 (arginine 45) is an Omega-N-methylarginine. Serine 66 is subject to Phosphoserine. Residue arginine 82 is modified to Omega-N-methylarginine. The interval glutamate 180–leucine 215 is coil 1A. The region spanning glutamate 180–methionine 493 is the IF rod domain. Residues glutamine 216–phenylalanine 234 are linker 1. Residues isoleucine 235–methionine 326 form a coil 1B region. Lysine 276 is subject to N6,N6-dimethyllysine. Residues glutamine 327–isoleucine 350 are linker 12. Phosphoserine is present on serine 344. A coil 2 region spans residues isoleucine 351–glutamate 489. Disordered stretches follow at residues glutamate 489–glycine 523 and serine 568–arginine 644. The interval glutamate 490–arginine 644 is tail. Low complexity predominate over residues valine 501–threonine 511. Composition is skewed to gly residues over residues serine 513–glycine 523 and serine 568–serine 620. Omega-N-methylarginine occurs at positions 518 and 588. A compositionally biased stretch (low complexity) spans glycine 621–serine 631. Residues valine 632–arginine 644 are compositionally biased toward polar residues.

This sequence belongs to the intermediate filament family. In terms of assembly, heterotetramer of two type I and two type II keratins. Heterodimer with KRT10. Two heterodimers of KRT1 and KRT10 form a heterotetramer. Forms a heterodimer with KRT14; the interaction is more abundant in the absence of KRT5. Interacts with PLEC isoform 1C, when in a heterodimer with KRT10. Interacts with ITGB1 in the presence of RACK1 and SRC, and with RACK1. Interacts with C1QBP; the association represents a cell surface kininogen receptor. Interacts with EPPK1; interaction is dependent of higher-order structure of intermediate filament. In terms of processing, undergoes deimination of some arginine residues (citrullination). The source of this protein is neonatal foreskin. The 67-kDa type II keratins are expressed in terminally differentiating epidermis.

The protein resides in the cell membrane. It is found in the cytoplasm. In terms of biological role, may regulate the activity of kinases such as PKC and SRC via binding to integrin beta-1 (ITB1) and the receptor of activated protein C kinase 1 (RACK1). In complex with C1QBP is a high affinity receptor for kininogen-1/HMWK. This chain is Keratin, type II cytoskeletal 1 (KRT1), found in Homo sapiens (Human).